The primary structure comprises 276 residues: Glutathione S-transferase-like protein ustS (276 aa).

The GST N-terminal domain occupies 16–109 (STLPGTSKSW…HLDETYPDPP (94 aa)).

This sequence belongs to the GST superfamily.

Its pathway is mycotoxin biosynthesis. Glutathione S-transferase-like protein; part of the gene cluster that mediates the biosynthesis of the secondary metabolite ustiloxin B, an antimitotic tetrapeptide. First, ustA is processed by the subtilisin-like endoprotease Kex2 that is outside the ustiloxin B gene cluster, at the C-terminal side of Arg-Lys, after transfer to Golgi apparatus through the endoplasmic reticulum (ER). Cleavage by KEX2 generates 16 peptides YAIG-I to YAIG-XVI. To process the precursor peptide further, at least two peptidases are necessary to cleave the N-terminal and C-terminal sides of the Tyr-Ala-Ile-Gly core peptide which serves as backbone for the synthesis of ustiloxin B, through cyclization and modification of the tyrosine with a non-protein coding amino acid, norvaline. One of the two peptidases must be the serine peptidase ustP; and the other pepdidase is probably ustH. Macrocyclization of the core peptide derived from ustA requires the tyrosinase ustQ, as well as the homologous oxidases ustYa and ustYb, and leads to the production of the first cyclization product N-desmethylustiloxin F. For the formation of N-desmethylustiloxin F, three oxidation steps are required, hydroxylation at the benzylic position, hydroxylation at either the aromatic ring of Tyr or beta-position of Ile, and oxidative cyclization. UstQ may catalyze the oxidation of a phenol moiety, whereas the ustYa and ustYb are most likely responsible for the remaining two-step oxidations. N-desmethylustiloxin F is then methylated by ustM to yield ustiloxin F which in turn substrate of the cytochrome P450 monooxygenase ustC which catalyzes the formation of S-deoxyustiloxin H. The flavoprotein monooxygenases ustF1 and ustF2 then participate in the modification of the side chain of S-deoxyustiloxin H, leading to the synthesis of an oxime intermediate, via ustiloxin H. Finally, carboxylative dehydration performed by the cysteine desulfurase-like protein ustD yields ustiloxin B. The chain is Glutathione S-transferase-like protein ustS from Aspergillus flavus (strain ATCC 200026 / FGSC A1120 / IAM 13836 / NRRL 3357 / JCM 12722 / SRRC 167).